Consider the following 542-residue polypeptide: MSMFCYQCQETAGGKGCTVRGVCGKNEEVAKLQDLLLYTVKGISYIVTKGNIDAAKLGNTNHEVLSSLFMTITNVNFDDGSIEKQIRKMLAVRDEMKKSVQAEGLHDAAVFSVDSRESMLKKADSVGVLSTQNEDIRSLREMITYGVKGMAAYAEHAKNIGKEDKEIYSFIYEALAATLDDSLSVDDLFALTLKTGEYGVKVMALLDEANTSRFGNPEITEVNIGVRKNPAILVSGHDLTDLEQLLEQTKGTGVDVYTHGEMLPAHYYPAFKKYDNFVGNYGNAWWKQVEEFESFHGPILFTTNCIVPPRSEEVRRRIFTTGSAGFPGCKHIEADENGKKDFSEIIELAKTLPAPDEIETGSIVGGFAHNQVMALADKVVEAVKSGAVKKFFVMAGCDGRMKSRSYYTEFAQNLPKDTVILTAGCAKYRYNKLGLGDIGGIPRVLDAGQCNDSYSLAVIALKLKEVFGLDDINKLPIAFNIAWYEQKAVIVLLALLYLGVKNIHLGPTLPGFLSPNVAKVLVEKFGIAGIGTVEDDIKLFMS.

4 residues coordinate [4Fe-4S] cluster: cysteine 5, cysteine 8, cysteine 17, and cysteine 23. Hybrid [4Fe-2O-2S] cluster-binding residues include histidine 237, glutamate 261, cysteine 305, cysteine 397, cysteine 425, cysteine 450, glutamate 485, and lysine 487. Position 397 is a cysteine persulfide (cysteine 397).

Belongs to the HCP family. [4Fe-4S] cluster is required as a cofactor. It depends on hybrid [4Fe-2O-2S] cluster as a cofactor.

It localises to the cytoplasm. The enzyme catalyses A + NH4(+) + H2O = hydroxylamine + AH2 + H(+). Its function is as follows. Catalyzes the reduction of hydroxylamine to form NH(3) and H(2)O. The chain is Hydroxylamine reductase from Acetivibrio thermocellus (strain ATCC 27405 / DSM 1237 / JCM 9322 / NBRC 103400 / NCIMB 10682 / NRRL B-4536 / VPI 7372) (Clostridium thermocellum).